The following is a 272-amino-acid chain: Bis(5'-nucleosyl)-tetraphosphatase, symmetrical (272 aa).

The protein belongs to the Ap4A hydrolase family.

It carries out the reaction P(1),P(4)-bis(5'-adenosyl) tetraphosphate + H2O = 2 ADP + 2 H(+). Its function is as follows. Hydrolyzes diadenosine 5',5'''-P1,P4-tetraphosphate to yield ADP. The chain is Bis(5'-nucleosyl)-tetraphosphatase, symmetrical from Chromohalobacter salexigens (strain ATCC BAA-138 / DSM 3043 / CIP 106854 / NCIMB 13768 / 1H11).